A 200-amino-acid chain; its full sequence is AP-5 complex subunit sigma-1 (200 aa).

Probably part of the adaptor protein complex 5 (AP-5) a tetramer composed of AP5B1, AP5M1, AP5S1 and AP5Z1. Interacts with ZFYVE26 and SPG11.

It is found in the cytoplasm. Its subcellular location is the cytosol. The protein resides in the late endosome membrane. It localises to the lysosome membrane. In terms of biological role, as part of AP-5, a probable fifth adaptor protein complex it may be involved in endosomal transport. According to PubMed:20613862, it is required for efficient homologous recombination DNA double-strand break repair. This chain is AP-5 complex subunit sigma-1 (AP5S1), found in Homo sapiens (Human).